We begin with the raw amino-acid sequence, 495 residues long: ATP synthase subunit beta, chloroplastic (495 aa).

172 to 179 (GGAGVGKT) provides a ligand contact to ATP.

It belongs to the ATPase alpha/beta chains family. F-type ATPases have 2 components, CF(1) - the catalytic core - and CF(0) - the membrane proton channel. CF(1) has five subunits: alpha(3), beta(3), gamma(1), delta(1), epsilon(1). CF(0) has four main subunits: a(1), b(1), b'(1) and c(9-12).

Its subcellular location is the plastid. It is found in the chloroplast thylakoid membrane. The catalysed reaction is ATP + H2O + 4 H(+)(in) = ADP + phosphate + 5 H(+)(out). Functionally, produces ATP from ADP in the presence of a proton gradient across the membrane. The catalytic sites are hosted primarily by the beta subunits. This Brimeura amethystina (Spanish hyacinth) protein is ATP synthase subunit beta, chloroplastic.